A 455-amino-acid polypeptide reads, in one-letter code: Phosphoglucosamine mutase (455 aa).

Catalysis depends on serine 102, which acts as the Phosphoserine intermediate. Residues serine 102, aspartate 241, aspartate 243, and aspartate 245 each coordinate Mg(2+). Serine 102 is modified (phosphoserine).

The protein belongs to the phosphohexose mutase family. Requires Mg(2+) as cofactor. Activated by phosphorylation.

It carries out the reaction alpha-D-glucosamine 1-phosphate = D-glucosamine 6-phosphate. Its function is as follows. Catalyzes the conversion of glucosamine-6-phosphate to glucosamine-1-phosphate. In Legionella pneumophila (strain Paris), this protein is Phosphoglucosamine mutase.